A 148-amino-acid chain; its full sequence is Urease accessory protein UreE (148 aa).

This sequence belongs to the UreE family.

The protein localises to the cytoplasm. Its function is as follows. Involved in urease metallocenter assembly. Binds nickel. Probably functions as a nickel donor during metallocenter assembly. This is Urease accessory protein UreE from Geobacillus kaustophilus (strain HTA426).